The following is a 243-amino-acid chain: Trypsin (243 aa).

A signal peptide spans 1 to 15 (MKFLLLCVLLGAAAA). A propeptide spans 16–20 (FDDDK) (activation peptide). In terms of domain architecture, Peptidase S1 spans 21–241 (IIGGATCAKS…YNAWIQNTIA (221 aa)). Intrachain disulfides connect Cys27/Cys157, Cys45/Cys61, Cys129/Cys230, Cys136/Cys203, Cys168/Cys182, and Cys193/Cys217. His60 functions as the Charge relay system in the catalytic mechanism. The Ca(2+) site is built by Glu72, Asn74, and Glu82. Residue Asp104 is the Charge relay system of the active site. Residue Ser197 is the Charge relay system of the active site.

Belongs to the peptidase S1 family. Ca(2+) is required as a cofactor.

The protein localises to the secreted. The protein resides in the extracellular space. It carries out the reaction Preferential cleavage: Arg-|-Xaa, Lys-|-Xaa.. This is Trypsin from Xenopus laevis (African clawed frog).